The sequence spans 234 residues: Cyclo(L-leucyl-L-leucyl) synthase (234 aa).

The active-site Nucleophile is S28. Residues 171–175 (YVLAE), Y195, and 200–201 (EL) contribute to the substrate site.

The protein belongs to the CDPS family.

The enzyme catalyses 2 L-leucyl-tRNA(Leu) = cyclo(L-leucyl-L-leucyl) + 2 tRNA(Leu) + 2 H(+). In terms of biological role, it uses activated amino acids in the form of aminoacyl-tRNAs (aa-tRNAs) as substrates to catalyze the ATP-independent formation of cyclodipeptides which are intermediates in diketopiperazine (DKP) biosynthetic pathways. Catalyzes the formation of cyclo(L-Leu-L-Leu) (cLL) from L-leucyl-tRNA(Leu). Can incorporate various nonpolar residues, such as L-phenylalanine, L-leucine and L-methionine, into cyclodipeptides. In Staphylococcus haemolyticus (strain JCSC1435), this protein is Cyclo(L-leucyl-L-leucyl) synthase.